The following is a 508-amino-acid chain: GMP synthase [glutamine-hydrolyzing] (508 aa).

The Glutamine amidotransferase type-1 domain occupies 1 to 189 (MILVLDFGSQ…ALLVCGCEKT (189 aa)). Cys-78 serves as the catalytic Nucleophile. Residues His-163 and Glu-165 contribute to the active site. One can recognise a GMPS ATP-PPase domain in the interval 190-383 (WGMQHFAQRE…LGVSQDFLMH (194 aa)). 217 to 223 (SGGVDST) serves as a coordination point for ATP.

Homodimer.

It catalyses the reaction XMP + L-glutamine + ATP + H2O = GMP + L-glutamate + AMP + diphosphate + 2 H(+). The protein operates within purine metabolism; GMP biosynthesis; GMP from XMP (L-Gln route): step 1/1. Functionally, catalyzes the synthesis of GMP from XMP. This chain is GMP synthase [glutamine-hydrolyzing], found in Helicobacter pylori (strain G27).